The primary structure comprises 394 residues: Elongation factor Tu (394 aa).

The tr-type G domain maps to 10–204 (KPHINVGTIG…AMDNYIPIPE (195 aa)). Positions 19–26 (GHVDHGKT) are G1. 19–26 (GHVDHGKT) is a binding site for GTP. A Mg(2+)-binding site is contributed by Thr26. The tract at residues 60–64 (GITIN) is G2. Residues 81–84 (DCPG) are G3. GTP-binding positions include 81–85 (DCPGH) and 136–139 (NKVD). Residues 136-139 (NKVD) form a G4 region. The G5 stretch occupies residues 174–176 (SAL).

This sequence belongs to the TRAFAC class translation factor GTPase superfamily. Classic translation factor GTPase family. EF-Tu/EF-1A subfamily. As to quaternary structure, monomer.

Its subcellular location is the cytoplasm. The enzyme catalyses GTP + H2O = GDP + phosphate + H(+). GTP hydrolase that promotes the GTP-dependent binding of aminoacyl-tRNA to the A-site of ribosomes during protein biosynthesis. This chain is Elongation factor Tu, found in Methylacidiphilum infernorum (isolate V4) (Methylokorus infernorum (strain V4)).